The sequence spans 541 residues: RING finger protein 37 (541 aa).

The U-box domain maps to D258–P338. R451 carries the post-translational modification Asymmetric dimethylarginine. The RING-type zinc-finger motif lies at C483–Q528.

In terms of assembly, interacts with UBE2L3. Interacts with VCP. Expressed in liver, heart, brain, kidney and testis.

Its subcellular location is the nucleus. It catalyses the reaction S-ubiquitinyl-[E2 ubiquitin-conjugating enzyme]-L-cysteine + [acceptor protein]-L-lysine = [E2 ubiquitin-conjugating enzyme]-L-cysteine + N(6)-ubiquitinyl-[acceptor protein]-L-lysine.. It participates in protein modification; protein ubiquitination. In terms of biological role, may have a ubiquitin-protein ligase activity acting as an E3 ubiquitin-protein ligase or as a ubiquitin-ubiquitin ligase promoting elongation of ubiquitin chains on substrates. The chain is RING finger protein 37 from Homo sapiens (Human).